Here is a 198-residue protein sequence, read N- to C-terminus: Dephospho-CoA kinase (198 aa).

The region spanning 4 to 198 (IIGITGGIAS…DSQLRRLQNE (195 aa)) is the DPCK domain. 12 to 17 (ASGKST) serves as a coordination point for ATP.

It belongs to the CoaE family.

The protein localises to the cytoplasm. It catalyses the reaction 3'-dephospho-CoA + ATP = ADP + CoA + H(+). The protein operates within cofactor biosynthesis; coenzyme A biosynthesis; CoA from (R)-pantothenate: step 5/5. Catalyzes the phosphorylation of the 3'-hydroxyl group of dephosphocoenzyme A to form coenzyme A. This chain is Dephospho-CoA kinase, found in Streptococcus mutans serotype c (strain ATCC 700610 / UA159).